The sequence spans 157 residues: Small ribosomal subunit protein uS7 (157 aa).

Belongs to the universal ribosomal protein uS7 family. In terms of assembly, part of the 30S ribosomal subunit. Contacts proteins S9 and S11.

One of the primary rRNA binding proteins, it binds directly to 16S rRNA where it nucleates assembly of the head domain of the 30S subunit. Is located at the subunit interface close to the decoding center, probably blocks exit of the E-site tRNA. The sequence is that of Small ribosomal subunit protein uS7 from Variovorax paradoxus (strain S110).